We begin with the raw amino-acid sequence, 459 residues long: Cysteine--tRNA ligase (459 aa).

Cys28 serves as a coordination point for Zn(2+). Residues 30–40 (ITIYDLCHIGH) carry the 'HIGH' region motif. Cys209, His234, and Glu238 together coordinate Zn(2+). A 'KMSKS' region motif is present at residues 266–270 (KMSKS). Lys269 contributes to the ATP binding site.

It belongs to the class-I aminoacyl-tRNA synthetase family. In terms of assembly, monomer. Zn(2+) is required as a cofactor.

It localises to the cytoplasm. The enzyme catalyses tRNA(Cys) + L-cysteine + ATP = L-cysteinyl-tRNA(Cys) + AMP + diphosphate. The protein is Cysteine--tRNA ligase of Shewanella denitrificans (strain OS217 / ATCC BAA-1090 / DSM 15013).